The chain runs to 150 residues: MVLCFPLLLLVLVLWGQVCPLHAIPKHLTKAHWFEIQHIRPSPLQCNRAMSGINNYTQHCKPQNTFLHDSFQNVAAVCDLLSITCKNGWHNCHQSLKPVNMTDCRLTSGKYPQCRYSAAAQYKLFIVACDPPQKSDPPYKLVPVHLDSIL.

Residues 1–23 (MVLCFPLLLLVLVLWGQVCPLHA) form the signal peptide. Residue His-38 is the Proton acceptor of the active site. Intrachain disulfides connect Cys-46/Cys-104, Cys-60/Cys-114, Cys-78/Cys-129, and Cys-85/Cys-92. N-linked (GlcNAc...) asparagine glycosylation occurs at Asn-55. Substrate-binding positions include 61–65 (KPQNT) and Lys-86. The N-linked (GlcNAc...) asparagine glycan is linked to Asn-100. Arg-105 is a substrate binding site. His-145 (proton donor) is an active-site residue.

Belongs to the pancreatic ribonuclease family. In terms of assembly, interacts (via N-terminus) with bacterial lipopolysaccharide (LPS).

The protein resides in the secreted. Its subcellular location is the lysosome. It localises to the cytoplasmic granule. In terms of biological role, ribonuclease which shows a preference for the pyrimidines uridine and cytosine. Has potent antibacterial activity against a range of Gram-positive and Gram-negative bacteria, including P.aeruginosa, A.baumanii, M.luteus, S.aureus, E.faecalis, E.faecium, S.saprophyticus and E.coli. Causes loss of bacterial membrane integrity, and also promotes agglutination of Gram-negative bacteria. Probably contributes to urinary tract sterility. Bactericidal activity is independent of RNase activity. In Aotus trivirgatus (Three-striped night monkey), this protein is Ribonuclease K6 (RNASE6).